Consider the following 372-residue polypeptide: Peptidyl-prolyl cis-trans isomerase D (372 aa).

The PPIase cyclophilin-type domain occupies 9 to 175 (FFDISIGGKP…KEVKIEDCGV (167 aa)). TPR repeat units follow at residues 220-253 (VEAV…LKQY), 271-304 (VSLF…DNTD), and 309-342 (AKAL…QPHD).

The protein belongs to the cyclophilin-type PPIase family. PPIase D subfamily.

Its subcellular location is the cytoplasm. The catalysed reaction is [protein]-peptidylproline (omega=180) = [protein]-peptidylproline (omega=0). Functionally, PPIases accelerate the folding of proteins. It catalyzes the cis-trans isomerization of proline imidic peptide bonds in oligopeptides. The chain is Peptidyl-prolyl cis-trans isomerase D (CPR6) from Kluyveromyces lactis (strain ATCC 8585 / CBS 2359 / DSM 70799 / NBRC 1267 / NRRL Y-1140 / WM37) (Yeast).